The sequence spans 783 residues: Rabenosyn-5 (783 aa).

N-acetylalanine is present on Ala-2. At Ser-3 the chain carries Phosphoserine. The C2H2-type zinc finger occupies Phe-14–His-37. Residues Arg-99 to Glu-262 are necessary for the correct targeting to endosomes. The FYVE-type zinc finger occupies Asp-156–Leu-259. 6 residues coordinate Zn(2+): Cys-162, Cys-165, Cys-178, Cys-181, Cys-186, and Cys-189. A compositionally biased stretch (polar residues) spans Lys-206–His-223. Positions Lys-206–Leu-240 are disordered. Ser-214, Ser-218, Ser-225, and Ser-229 each carry phosphoserine. Positions Arg-227–Val-239 are enriched in low complexity. Zn(2+) is bound by residues Cys-251 and Cys-254. The necessary for interaction with RAB4A stretch occupies residues Gln-263–Gln-499. The necessary for interaction with EHD1 stretch occupies residues Gln-263–Asn-783. Coiled coils occupy residues Thr-377–Glu-412 and Gln-471–Arg-531. Basic and acidic residues-rich tracts occupy residues Lys-387–Glu-399 and Glu-405–Gln-414. Residues Lys-387–Pro-433 are disordered. One can recognise a UIM domain in the interval Tyr-495 to Glu-514. Disordered regions lie at residues Ser-569 to Glu-638 and Phe-663 to Ile-733. 2 stretches are compositionally biased toward polar residues: residues Ser-571 to Ala-584 and Thr-610 to Ala-623. The tract at residues Pro-627–Asn-783 is necessary for interaction with RAB5A. Acidic residues predominate over residues Phe-663–Ala-673. Residue Ser-686 is modified to Phosphoserine. Residues Val-721–Ile-733 are compositionally biased toward acidic residues.

As to quaternary structure, interacts with EHD1, RAB4A, RAB5A, RAB22A, RAB24 and VPS45. Binds simultaneously to RAB4A and RAB5A in vitro. Interacts with RAB4A and RAB5A that has been activated by GTP binding.

The protein localises to the cell membrane. Its subcellular location is the early endosome membrane. In terms of biological role, rab4/Rab5 effector protein acting in early endocytic membrane fusion and membrane trafficking of recycling endosomes. Required for endosome fusion either homotypically or with clathrin coated vesicles. Plays a role in the lysosomal trafficking of CTSD/cathepsin D from the Golgi to lysosomes. Also promotes the recycling of transferrin directly from early endosomes to the plasma membrane. Binds phospholipid vesicles containing phosphatidylinositol 3-phosphate (PtdInsP3). Plays a role in the recycling of transferrin receptor to the plasma membrane. The protein is Rabenosyn-5 of Mus musculus (Mouse).